Here is a 91-residue protein sequence, read N- to C-terminus: Putative regulatory protein PTH_1796 (91 aa).

This sequence belongs to the RemA family.

The sequence is that of Putative regulatory protein PTH_1796 from Pelotomaculum thermopropionicum (strain DSM 13744 / JCM 10971 / SI).